Here is a 20-residue protein sequence, read N- to C-terminus: Trypsin inhibitor A chain (20 aa).

This sequence belongs to the protease inhibitor I3 (leguminous Kunitz-type inhibitor) family. As to quaternary structure, heterodimer of an 'A' and a 'B' chain linked by a disulfide bond.

Functionally, inhibits trypsin and alpha-chymotrypsin. The protein is Trypsin inhibitor A chain of Albizia julibrissin (Silk tree).